Here is a 434-residue protein sequence, read N- to C-terminus: Nuclear receptor subfamily 1 group I member 2 (434 aa).

The nuclear receptor DNA-binding region spans 38 to 107; that stretch reads PQICRVCGDK…RLRKCLESGM (70 aa). 2 NR C4-type zinc fingers span residues 41 to 61 and 77 to 102; these read CRVC…CEGC and CPFR…LRKC. A Bipartite nuclear localization signal motif is present at residues 66 to 92; that stretch reads RRAMKRNARLRCPFRKGACEITRKTRR. The hinge stretch occupies residues 108–145; that stretch reads KKEMIMSDEAVEERRALIKRKKSERTGTQPLGVQGLTE. The NR LBD domain maps to 146–433; the sequence is EQRMMIRELM…LMQELFGITG (288 aa). Hyperforin is bound by residues Ser247, 285–288, and His407; that span reads QLRF.

The protein belongs to the nuclear hormone receptor family. NR1 subfamily. As to quaternary structure, heterodimer with RXR. Interacts with NCOA1. Interacts (via domain NR LBD) with CRY1 and CRY2 in a ligand-dependent manner. As to expression, expressed in liver, colon and small intestine.

Its subcellular location is the nucleus. Nuclear receptor that binds and is activated by variety of endogenous and xenobiotic compounds. Transcription factor that activates the transcription of multiple genes involved in the metabolism and secretion of potentially harmful xenobiotics, drugs and endogenous compounds. Activated by the antibiotic rifampicin and various plant metabolites, such as hyperforin, guggulipid, colupulone, and isoflavones. Response to specific ligands is species-specific. Activated by naturally occurring steroids, such as pregnenolone and progesterone. Binds to a response element in the promoters of the CYP3A4 and ABCB1/MDR1 genes. This chain is Nuclear receptor subfamily 1 group I member 2 (NR1I2), found in Homo sapiens (Human).